The chain runs to 1153 residues: Probable RNA-dependent RNA polymerase 3 (1153 aa).

The protein belongs to the RdRP family. As to expression, expressed in shoot apical meristem (SAM) and panicles.

The catalysed reaction is RNA(n) + a ribonucleoside 5'-triphosphate = RNA(n+1) + diphosphate. Probably involved in the RNA silencing pathway and required for the generation of small interfering RNAs (siRNAs). This is Probable RNA-dependent RNA polymerase 3 (RDR3) from Oryza sativa subsp. japonica (Rice).